A 211-amino-acid chain; its full sequence is Nucleoside triphosphate pyrophosphatase (211 aa).

Asp-78 acts as the Proton acceptor in catalysis.

The protein belongs to the Maf family. It depends on a divalent metal cation as a cofactor.

It is found in the cytoplasm. The enzyme catalyses a ribonucleoside 5'-triphosphate + H2O = a ribonucleoside 5'-phosphate + diphosphate + H(+). It catalyses the reaction a 2'-deoxyribonucleoside 5'-triphosphate + H2O = a 2'-deoxyribonucleoside 5'-phosphate + diphosphate + H(+). In terms of biological role, nucleoside triphosphate pyrophosphatase. May have a dual role in cell division arrest and in preventing the incorporation of modified nucleotides into cellular nucleic acids. In Mycolicibacterium smegmatis (strain ATCC 700084 / mc(2)155) (Mycobacterium smegmatis), this protein is Nucleoside triphosphate pyrophosphatase.